We begin with the raw amino-acid sequence, 323 residues long: Quinolinate synthase (323 aa).

Iminosuccinate contacts are provided by H38 and S55. C100 is a binding site for [4Fe-4S] cluster. Iminosuccinate is bound by residues 126–128 and S143; that span reads YIN. C186 contributes to the [4Fe-4S] cluster binding site. Iminosuccinate contacts are provided by residues 212–214 and T229; that span reads HPE. C279 contacts [4Fe-4S] cluster.

This sequence belongs to the quinolinate synthase family. Type 2 subfamily. It depends on [4Fe-4S] cluster as a cofactor.

It is found in the cytoplasm. It carries out the reaction iminosuccinate + dihydroxyacetone phosphate = quinolinate + phosphate + 2 H2O + H(+). Its pathway is cofactor biosynthesis; NAD(+) biosynthesis; quinolinate from iminoaspartate: step 1/1. In terms of biological role, catalyzes the condensation of iminoaspartate with dihydroxyacetone phosphate to form quinolinate. The sequence is that of Quinolinate synthase from Gloeothece citriformis (strain PCC 7424) (Cyanothece sp. (strain PCC 7424)).